Reading from the N-terminus, the 388-residue chain is UTP--glucose-1-phosphate uridylyltransferase (388 aa).

Residue Asp-118 coordinates Mg(2+).

The protein belongs to the CugP-type UDP-glucose pyrophosphorylase family. Requires Mg(2+) as cofactor.

The catalysed reaction is alpha-D-glucose 1-phosphate + UTP + H(+) = UDP-alpha-D-glucose + diphosphate. Its function is as follows. Catalyzes the formation of UDP-glucose, from UTP and glucose 1-phosphate. Is highly specific since it cannot use other NTPs such as dTTP, CTP, ATP, and GTP, and other sugar-1P such as GlcNAc-1P, Gal-1P, and Man-1P, as substrates. Has probably a central and essential role as the substrate supplier for galactolipid synthesis; galactolipids are major constituents of the photosynthetic thylakoid membrane and important for photosynthetic activity. In Synechocystis sp. (strain ATCC 27184 / PCC 6803 / Kazusa), this protein is UTP--glucose-1-phosphate uridylyltransferase.